The primary structure comprises 900 residues: Exosome complex component 10 homolog (900 aa).

Disordered regions lie at residues 1–31 (MPRTPKRVHQEAKEESAQADQPPKKSASEDV) and 147–174 (TSIEPAVASPQTQGTPKAGSWNRTTGTP). The segment covering 8 to 28 (VHQEAKEESAQADQPPKKSAS) has biased composition (basic and acidic residues). The 3'-5' exonuclease domain occupies 273–438 (VVDTVEKLKQ…YVYGRMTNDL (166 aa)). 4 residues coordinate Mg(2+): aspartate 296, glutamate 298, aspartate 354, and aspartate 423. The HRDC domain maps to 485–565 (DNRQLYALRG…LKARDQPLVK (81 aa)). The interval 731–900 (EQLKRKHPQA…FSNVRKEGKK (170 aa)) is disordered. The segment covering 809–826 (RKQKKNQFQRGFKAKNRG) has biased composition (basic residues). The segment covering 878–887 (NNRNNKQFNK) has biased composition (low complexity).

Belongs to the exosome component 10/RRP6 family. In terms of assembly, component of the RNA exosome complex. Interacts with spn-A/Rad51; the interaction is required for the recruitment of spn-A to the DNA-damage response foci. Interacts with Su(var)3-9, a heterochromatin factor; the interaction promotes association of Rrp6 with a subset of genomic loci. Interacts with Su(var)205, a heterochromatin factor. Interacts with HDAC1, a heterochromatin factor. The cofactor is Mg(2+). In terms of tissue distribution, salivary gland (at protein level).

Its subcellular location is the nucleus. It localises to the chromosome. The protein localises to the cytoplasm. The protein resides in the cell cortex. It is found in the cytoskeleton. Its subcellular location is the microtubule organizing center. It localises to the centrosome. The protein localises to the spindle. The protein resides in the midbody. Catalytic component of the RNA exosome complex which has 3'-&gt;5' exoribonuclease activity and participates in a multitude of cellular RNA processing and degradation events. Degrades a large variety of non-coding RNAs that are processed by the exosome, such as pre-rRNAs and some small nucleolar RNAs (snoRNAs). Degrades transcripts derived from different types of heterochromatic repeats, such as subtelomeric minisatellites and simple gagaa repeats. Degrades transcripts derived from transposons and transposon fragments. Degrades chromatin-associated transcripts and contributes to the compaction of heterochromatin. Required for the efficient repair of DNA double-strand breaks via homologous recombination after irradiation. Required for cell proliferation and error-free mitosis. The polypeptide is Exosome complex component 10 homolog (Drosophila melanogaster (Fruit fly)).